Reading from the N-terminus, the 398-residue chain is Glia-derived nexin (398 aa).

The first 19 residues, 1–19 (MNWHLPLFLLASVTLPSIC), serve as a signal peptide directing secretion. 2 N-linked (GlcNAc...) asparagine glycosylation sites follow: N118 and N159.

Belongs to the serpin family.

It localises to the secreted. It is found in the extracellular space. Serine protease inhibitor with activity toward thrombin, trypsin, and urokinase. Promotes neurite extension by inhibiting thrombin. Binds heparin. The polypeptide is Glia-derived nexin (SERPINE2) (Homo sapiens (Human)).